The primary structure comprises 666 residues: Tripartite terminase subunit 3 (666 aa).

The Walker A motif signature appears at 208 to 215; that stretch reads VPRRHGKT. A Walker B motif motif is present at residues 300-305; sequence LLIVDE. Glu305 serves as the catalytic For ATPase activity. Catalysis depends on for nuclease activity residues Asp458, Glu529, and Asp643.

The protein belongs to the herpesviridae TRM3 protein family. Interacts with the terminase subunits TRM1 and TRM2. Interacts with portal protein.

It localises to the host nucleus. Its function is as follows. Component of the molecular motor that translocates viral genomic DNA in empty capsid during DNA packaging. Forms a tripartite terminase complex together with TRM1 and TRM2 in the host cytoplasm. Once the complex reaches the host nucleus, it interacts with the capsid portal vertex. This portal forms a ring in which genomic DNA is translocated into the capsid. TRM3 carries an RNase H-like nuclease activity that plays an important role for the cleavage of concatemeric viral DNA into unit length genomes. This is Tripartite terminase subunit 3 from Homo sapiens (Human).